The following is an 89-amino-acid chain: Small ribosomal subunit protein uS15 (89 aa).

It belongs to the universal ribosomal protein uS15 family. In terms of assembly, part of the 30S ribosomal subunit. Forms a bridge to the 50S subunit in the 70S ribosome, contacting the 23S rRNA.

Its function is as follows. One of the primary rRNA binding proteins, it binds directly to 16S rRNA where it helps nucleate assembly of the platform of the 30S subunit by binding and bridging several RNA helices of the 16S rRNA. Functionally, forms an intersubunit bridge (bridge B4) with the 23S rRNA of the 50S subunit in the ribosome. In Lactobacillus delbrueckii subsp. bulgaricus (strain ATCC 11842 / DSM 20081 / BCRC 10696 / JCM 1002 / NBRC 13953 / NCIMB 11778 / NCTC 12712 / WDCM 00102 / Lb 14), this protein is Small ribosomal subunit protein uS15.